The sequence spans 57 residues: Andropin (57 aa).

The N-terminal stretch at 1–23 is a signal peptide; that stretch reads MKYFVVLVVLALILAITVDPSDA.

This sequence belongs to the andropin family. In terms of tissue distribution, ejaculatory duct of adult males.

The protein localises to the secreted. Its function is as follows. Male-specific peptide with moderate activity against Gram-positive bacteria. The polypeptide is Andropin (Anp) (Drosophila sechellia (Fruit fly)).